The chain runs to 559 residues: Potassium-transporting ATPase potassium-binding subunit (559 aa).

12 helical membrane-spanning segments follow: residues 5-25 (GFLL…PLGV), 63-83 (LLAI…MLLG), 132-152 (GLTV…FALI), 170-190 (LVRI…LLFI), 250-270 (LTNM…CFAF), 283-303 (LLWA…SAEV), 329-349 (VLVS…AVIA), 356-376 (ALGG…FGGV), 379-399 (GLYG…LMIG), 416-436 (MTAL…ALAM), 484-504 (LLAF…MAIA), and 524-544 (GALF…LTFI).

It belongs to the KdpA family. In terms of assembly, the system is composed of three essential subunits: KdpA, KdpB and KdpC.

It localises to the cell inner membrane. Part of the high-affinity ATP-driven potassium transport (or Kdp) system, which catalyzes the hydrolysis of ATP coupled with the electrogenic transport of potassium into the cytoplasm. This subunit binds the periplasmic potassium ions and delivers the ions to the membrane domain of KdpB through an intramembrane tunnel. The protein is Potassium-transporting ATPase potassium-binding subunit of Citrobacter koseri (strain ATCC BAA-895 / CDC 4225-83 / SGSC4696).